We begin with the raw amino-acid sequence, 146 residues long: Prefoldin subunit alpha (146 aa).

The protein belongs to the prefoldin alpha subunit family. As to quaternary structure, heterohexamer of two alpha and four beta subunits.

The protein localises to the cytoplasm. Molecular chaperone capable of stabilizing a range of proteins. Seems to fulfill an ATP-independent, HSP70-like function in archaeal de novo protein folding. The chain is Prefoldin subunit alpha from Methanobrevibacter smithii (strain ATCC 35061 / DSM 861 / OCM 144 / PS).